The sequence spans 147 residues: Chorion class B protein B.L1 (147 aa).

Positions 1–38 (IGCGRGCGGRGYGGLGYGGLGYGGLGYGGLGGGCGRGF) are left arm. Repeat copies occupy residues 11 to 15 (GYGGL), 16 to 20 (GYGGL), 21 to 25 (GYGGL), and 26 to 30 (GYGGL). The 4 X 5 AA tandem repeats of G-Y-G-G-L stretch occupies residues 11–30 (GYGGLGYGGLGYGGLGYGGL). The segment at 39 to 107 (SGGGLPVATA…GNGAVGITRE (69 aa)) is central domain. The interval 108–147 (GGLGYGAGYGGGYGLGYGGYGGGYGLGYGGYGGCGCGCGY) is right arm (Gly-rich tandem repeats).

Belongs to the chorion protein family.

Its function is as follows. This protein is one of many from the eggshell of the silk moth. The polypeptide is Chorion class B protein B.L1 (Bombyx mori (Silk moth)).